The sequence spans 842 residues: Elongation factor 2 (842 aa).

The tr-type G domain occupies 17-346 (ANVRNMSVIA…MIVLHLPSPV (330 aa)). Residues 26 to 33 (AHVDHGKS), 158 to 161 (NKVD), and 213 to 215 (SGL) contribute to the GTP site. Histidine 699 is subject to Diphthamide.

This sequence belongs to the TRAFAC class translation factor GTPase superfamily. Classic translation factor GTPase family. EF-G/EF-2 subfamily.

It is found in the cytoplasm. It carries out the reaction GTP + H2O = GDP + phosphate + H(+). It functions in the pathway protein biosynthesis; polypeptide chain elongation. Functionally, catalyzes the GTP-dependent ribosomal translocation step during translation elongation. During this step, the ribosome changes from the pre-translocational (PRE) to the post-translocational (POST) state as the newly formed A-site-bound peptidyl-tRNA and P-site-bound deacylated tRNA move to the P and E sites, respectively. Catalyzes the coordinated movement of the two tRNA molecules, the mRNA and conformational changes in the ribosome. This is Elongation factor 2 (EFT2) from Meyerozyma guilliermondii (strain ATCC 6260 / CBS 566 / DSM 6381 / JCM 1539 / NBRC 10279 / NRRL Y-324) (Yeast).